The sequence spans 458 residues: MDFGLTNNSIKAFEDQKLLHIHQSCVSYPSDTLICSIPVSAKNVDLNIPFKNILWVDKTGPNSVTLSYVSRSSKVATKCWVDFVENSDQFCEYLLDVAYKGIKRSRRFIVFINPHGGKGKAKHIWESEAEPVFSSAHSICEVVLTRRKDHAKSIAKNLDVGSYDGILSVGGDGLFHEVINGLGERDDYLEAFKLPVCMIPGGSGNAFSYNATGQLKPALTALEILKGRPTSFDLMTFEQKGKKAYSFLTANYGIIADCDIGTENWRFMGENRAYLGFFLRLFQKPDWKCSIEMDVVSSDRTEIKHMYEKSKNLAPMSESSDSDKTVSTSPESHLLTFEINDLSIFCAGLLPYIAPDAKMFPAASNDDGLIDVVIVYSKQFRKSLLSMFTQLDNGGFYYSKHLNYYKVRSFRFTPVNTGKRHYFALDGESYPLEPFECRVAPKLGTTLSPVAGFQLLDI.

The region spanning 103-241 (KRSRRFIVFI…FDLMTFEQKG (139 aa)) is the DAGKc domain. ATP is bound by residues 113–115 (NPH) and Thr145. 170-173 (GGDG) lines the substrate pocket. Asp172 functions as the Proton donor/acceptor in the catalytic mechanism. ATP is bound by residues Glu177, 202–204 (GSG), Arg266, Arg272, and 426–428 (DGE).

The protein localises to the cell membrane. It localises to the endoplasmic reticulum membrane. The protein resides in the late endosome membrane. It is found in the golgi apparatus membrane. It carries out the reaction a sphingoid base + ATP = a sphingoid 1-phosphate + ADP + H(+). In terms of biological role, catalyzes the phosphorylation of the sphingoid long chain bases dihydrosphingosine (DHS) and phytosphingosine (PHS) to form dihydrosphingosine 1-phosphate (DHS-1P) and phytosphingosine 1-phosphate (PHS-1P) respectively. Involved in the biosynthesis of sphingolipids and ceramides. Involved in heat-induced transient cell cycle arrest. Accumulation of phosphorylated sphingoid long chain bases (LCBPs) stimulates calcium influx and activates calcineurin signaling. Involved in heat-stress resistance. The polypeptide is Sphingoid long chain base kinase 4 (lcb4) (Schizosaccharomyces pombe (strain 972 / ATCC 24843) (Fission yeast)).